A 343-amino-acid polypeptide reads, in one-letter code: MSIIKTNSEILNQLLYGQDLDAETSNTLMKRWLNDEILEVQTGAFLSALRAKGATGTELSSMADVLLNACKLPVERPNLFMVDTCGTGGDGANTFNISTAVAFVASSCGVNIAKHGNKSASGKVGSADVLLNLGINLNSTLEKVISSIDQIGITFLFAPVWHKSLIKLAPLRKALGIRTVFNQLGPLVNPLRPNAQVLGVASDELLNPMASALSRMEMDRAIVVHGYGGLDEASLEGDNKIIFVDKGELKHSKINVSDFNYQNTSNKDLIVSNDDSYEDILKSVLNGSGQKAHLDVVALNTALVLWVAGIEDDIEKGFKKALFSMSKAEPWNKFLLLKNYLES.

5-phospho-alpha-D-ribose 1-diphosphate contacts are provided by residues Gly-86, 89–90 (GD), Thr-94, 96–99 (NIST), 114–122 (KHGNKSASG), and Ser-126. Gly-86 contacts anthranilate. A Mg(2+)-binding site is contributed by Ser-98. Residue Asn-117 participates in anthranilate binding. Arg-172 lines the anthranilate pocket. The Mg(2+) site is built by Asp-231 and Glu-232.

Belongs to the anthranilate phosphoribosyltransferase family. In terms of assembly, homodimer. It depends on Mg(2+) as a cofactor.

The enzyme catalyses N-(5-phospho-beta-D-ribosyl)anthranilate + diphosphate = 5-phospho-alpha-D-ribose 1-diphosphate + anthranilate. The protein operates within amino-acid biosynthesis; L-tryptophan biosynthesis; L-tryptophan from chorismate: step 2/5. Catalyzes the transfer of the phosphoribosyl group of 5-phosphorylribose-1-pyrophosphate (PRPP) to anthranilate to yield N-(5'-phosphoribosyl)-anthranilate (PRA). The sequence is that of Anthranilate phosphoribosyltransferase from Prochlorococcus marinus subsp. pastoris (strain CCMP1986 / NIES-2087 / MED4).